We begin with the raw amino-acid sequence, 258 residues long: UPF0246 protein LHK_02295 (258 aa).

Belongs to the UPF0246 family.

This chain is UPF0246 protein LHK_02295, found in Laribacter hongkongensis (strain HLHK9).